A 1055-amino-acid chain; its full sequence is Putative helicase/primase complex protein (1055 aa).

Belongs to the asfivirus F1055L family.

Functionally, may be involved in DNA replication. The polypeptide is Putative helicase/primase complex protein (Ornithodoros (relapsing fever ticks)).